Consider the following 742-residue polypeptide: Vesicle-fusing ATPase (742 aa).

Residues 499–504 and 539–546 contribute to the ATP site; these read NGMVDC and SGSGKTAL. A Mg(2+)-binding site is contributed by T544.

This sequence belongs to the AAA ATPase family. As to quaternary structure, homohexamer. Binds to SNARE-SNAP complexes to form 20S particles. The cofactor is Mg(2+).

The protein localises to the cytoplasm. It catalyses the reaction ATP + H2O = ADP + phosphate + H(+). Its function is as follows. Required for vesicle-mediated transport. Catalyzes the fusion of transport vesicles within the Golgi cisternae. Is also required for transport from the endoplasmic reticulum to the Golgi stack. Seems to function as a fusion protein required for the delivery of cargo proteins to all compartments of the Golgi stack independent of vesicle origin. Required for maintaining the normal morphology of the Golgi apparatus. The sequence is that of Vesicle-fusing ATPase from Arabidopsis thaliana (Mouse-ear cress).